The primary structure comprises 470 residues: ATP synthase subunit beta (470 aa).

157-164 (GGAGVGKT) contributes to the ATP binding site.

The protein belongs to the ATPase alpha/beta chains family. In terms of assembly, F-type ATPases have 2 components, CF(1) - the catalytic core - and CF(0) - the membrane proton channel. CF(1) has five subunits: alpha(3), beta(3), gamma(1), delta(1), epsilon(1). CF(0) has three main subunits: a(1), b(2) and c(9-12). The alpha and beta chains form an alternating ring which encloses part of the gamma chain. CF(1) is attached to CF(0) by a central stalk formed by the gamma and epsilon chains, while a peripheral stalk is formed by the delta and b chains.

Its subcellular location is the cell inner membrane. It carries out the reaction ATP + H2O + 4 H(+)(in) = ADP + phosphate + 5 H(+)(out). In terms of biological role, produces ATP from ADP in the presence of a proton gradient across the membrane. The catalytic sites are hosted primarily by the beta subunits. The chain is ATP synthase subunit beta from Geobacter sp. (strain M21).